A 713-amino-acid polypeptide reads, in one-letter code: Vacuolar amino acid transporter 4 (713 aa).

The interval 1 to 33 (MVTNNGDGEHLGIRRNGNLRHPSNNMKIPRRAQ) is disordered. Residues 1-242 (MVTNNGDGEH…IDKVPFLTRN (242 aa)) are Vacuolar-facing. Positions 21–33 (HPSNNMKIPRRAQ) are enriched in polar residues. S88 is subject to Phosphoserine. The segment at 99–121 (RSSVSHGNEAIPRVNPTKNSSAS) is disordered. Phosphoserine occurs at positions 130 and 165. A disordered region spans residues 200-233 (KRQEHQLNDSASSDFTSHESDSINQSSPSSNQDI). The segment covering 221–231 (SINQSSPSSNQ) has biased composition (low complexity). The chain crosses the membrane as a helical span at residues 243–263 (FLEFLYVFGHFAGESFEDDFI). Residues 264-301 (PDSSNMMIRGEDERSALLSRPDHMKVLPSAKGTTSTKK) are Cytoplasmic-facing. Residues 302–322 (VFLILLKSFIGTGVLFLPNAF) form a helical membrane-spanning segment. Topologically, residues 323–326 (HNGG) are vacuolar. A helical membrane pass occupies residues 327-347 (LFFSVSMLAFFGIYSYWCYYI). The Cytoplasmic portion of the chain corresponds to 348-373 (LVQAKSSCGVSSFGDIGLKLYGPWMR). The chain crosses the membrane as a helical span at residues 374–394 (IIILFSLVITQVGFSGAYMIF). Residues 395–410 (TAKNLQAFLDNVFHVG) are Vacuolar-facing. Residues 411 to 431 (VLPLSYLMVFQTIIFIPLSFI) traverse the membrane as a helical segment. The Cytoplasmic segment spans residues 432–438 (RNISKLS). The helical transmembrane segment at 439–459 (LPSLLANFFIMAGLVIVIIFT) threads the bilayer. The Vacuolar portion of the chain corresponds to 460–483 (AKRLFFDLMGTPAMGVVYGLNADR). A helical transmembrane segment spans residues 484 to 504 (WTLFIGTAIFAFEGIGLIIPV). Over 505–515 (QDSMRNPEKFP) the chain is Cytoplasmic. The chain crosses the membrane as a helical span at residues 516–536 (LVLALVILTATILFISIATLG). The Vacuolar segment spans residues 537–561 (YLAYGSNVQTVILLNLPQSNIFVNL). The helical transmembrane segment at 562 to 582 (IQLFYSIAIMLSTPLQLFPAI) threads the bilayer. Residues 583 to 621 (KIIENKFFPKFTKIYVKHDDLTTRVELRPNSGKLNWKIK) are Cytoplasmic-facing. A helical transmembrane segment spans residues 622–642 (WLKNFIRSIIVIIVVSIAYFG). Residues 643-648 (SDNLDK) are Vacuolar-facing. Residues 649–669 (FVSVIGSLACIPLVYIYPSML) traverse the membrane as a helical segment. Over 670–692 (HLRGNSLPETKGEFWRFKPMLDT) the chain is Cytoplasmic. Residues 693–711 (ILIFFGIASMLYTSYQSIF) traverse the membrane as a helical segment. The Vacuolar portion of the chain corresponds to 712 to 713 (GV).

The protein belongs to the amino acid/polyamine transporter 2 family.

The protein resides in the vacuole membrane. Involved in amino acid efflux from the vacuole to the cytoplasm. Capable of transporting large neutral amino acids including tyrosine, glutamine, asparagine, isoleucine and leucine. This chain is Vacuolar amino acid transporter 4 (AVT4), found in Saccharomyces cerevisiae (strain ATCC 204508 / S288c) (Baker's yeast).